Here is a 198-residue protein sequence, read N- to C-terminus: Suppressor of cytokine signaling 2 (198 aa).

Positions 1–29 (MTLRCLEPSGNGGEGTRSQWGTAGSAEEP) are disordered. The segment at 1–75 (MTLRCLEPSG…PEGTFLIRDS (75 aa)) is interaction with AREL1. A Phosphoserine modification is found at S30. The SH2 domain occupies 48–156 (WYWGSMTVNE…TVHLYLTKPL (109 aa)). S52 bears the Phosphoserine; by PKC mark. In terms of domain architecture, SOCS box spans 151–197 (YLTKPLYTSAPSLQHLCRLTINKCTGAIWGLPLPTRLKDYLEEYKFQ). A Glycyl lysine isopeptide (Lys-Gly) (interchain with G-Cter in ubiquitin) cross-link involves residue K173.

As to quaternary structure, substrate-recognition component of the ECS(SOCS2) complex, composed of SOCS2, CUL5, ELOB, ELOC and RNF7/RBX2. Interacts with IGF1R. Interacts with DCUN1D1. Post-translationally, ubiquitinated; mediated by AREL1 and leading to its subsequent proteasomal degradation. Ubiquitination is dependent on its phosphorylation at Ser-52, by PKC. Ubiquitination is stimulated by LPS. Phosphorylation at Ser-52 by PKC facilitates its ubiquitination and proteasomal degradation. In terms of tissue distribution, high expression in heart, placenta, lung, kidney and prostate. Predominantly expressed in pulmonary epithelia cells, specifically type II pneumocytes.

It localises to the cytoplasm. It participates in protein modification; protein ubiquitination. With respect to regulation, substrate-binding is prevented by the covalent inhibitor MN551 that cross-links with Cys-111. Also inhibited by a MN551 derivative, MN714, which contains a pivaloyloxymethyl that allows cell permeability. Its function is as follows. Substrate-recognition component of a cullin-5-RING E3 ubiquitin-protein ligase complex (ECS complex, also named CRL5 complex), which mediates the ubiquitination and subsequent proteasomal degradation of target proteins, such as EPOR and GHR. Specifically recognizes and binds phosphorylated proteins via its SH2 domain, promoting their ubiquitination. The ECS(SOCS2) complex acts as a key regulator of growth hormone receptor (GHR) levels by mediating ubiquitination and degradation of GHR, following GHR phosphorylation by JAK2. The ECS(SOCS2) also catalyzes ubiquitination and degradation of JAK2-phosphorylated EPOR. This is Suppressor of cytokine signaling 2 from Homo sapiens (Human).